We begin with the raw amino-acid sequence, 528 residues long: Lanosterol 14-alpha demethylase (528 aa).

Cys470 serves as a coordination point for heme.

Belongs to the cytochrome P450 family. The cofactor is heme.

The protein resides in the membrane. It carries out the reaction a 14alpha-methyl steroid + 3 reduced [NADPH--hemoprotein reductase] + 3 O2 = a Delta(14) steroid + formate + 3 oxidized [NADPH--hemoprotein reductase] + 4 H2O + 4 H(+). It catalyses the reaction a 14alpha-methyl steroid + reduced [NADPH--hemoprotein reductase] + O2 = a 14alpha-hydroxymethyl steroid + oxidized [NADPH--hemoprotein reductase] + H2O + H(+). The enzyme catalyses a 14alpha-hydroxymethyl steroid + reduced [NADPH--hemoprotein reductase] + O2 = a 14alpha-formyl steroid + oxidized [NADPH--hemoprotein reductase] + 2 H2O + H(+). The catalysed reaction is a 14alpha-formyl steroid + reduced [NADPH--hemoprotein reductase] + O2 = a Delta(14) steroid + formate + oxidized [NADPH--hemoprotein reductase] + H2O + 2 H(+). It carries out the reaction lanosterol + 3 reduced [NADPH--hemoprotein reductase] + 3 O2 = 4,4-dimethyl-5alpha-cholesta-8,14,24-trien-3beta-ol + formate + 3 oxidized [NADPH--hemoprotein reductase] + 4 H2O + 4 H(+). It catalyses the reaction lanosterol + reduced [NADPH--hemoprotein reductase] + O2 = 32-hydroxylanosterol + oxidized [NADPH--hemoprotein reductase] + H2O + H(+). The enzyme catalyses 32-hydroxylanosterol + reduced [NADPH--hemoprotein reductase] + O2 = 32-oxolanosterol + oxidized [NADPH--hemoprotein reductase] + 2 H2O + H(+). The catalysed reaction is 32-oxolanosterol + reduced [NADPH--hemoprotein reductase] + O2 = 4,4-dimethyl-5alpha-cholesta-8,14,24-trien-3beta-ol + formate + oxidized [NADPH--hemoprotein reductase] + H2O + 2 H(+). It carries out the reaction eburicol + 3 reduced [NADPH--hemoprotein reductase] + 3 O2 = 14-demethyleburicol + formate + 3 oxidized [NADPH--hemoprotein reductase] + 4 H2O + 4 H(+). It catalyses the reaction eburicol + reduced [NADPH--hemoprotein reductase] + O2 = 32-hydroxyeburicol + oxidized [NADPH--hemoprotein reductase] + H2O + H(+). The enzyme catalyses 32-hydroxyeburicol + reduced [NADPH--hemoprotein reductase] + O2 = 32-oxoeburicol + oxidized [NADPH--hemoprotein reductase] + 2 H2O + H(+). The catalysed reaction is 32-oxoeburicol + reduced [NADPH--hemoprotein reductase] + O2 = 14-demethyleburicol + formate + oxidized [NADPH--hemoprotein reductase] + H2O + 2 H(+). It functions in the pathway steroid biosynthesis; zymosterol biosynthesis; zymosterol from lanosterol: step 1/6. Its function is as follows. Sterol 14alpha-demethylase that plays a critical role in the third module of ergosterol biosynthesis pathway, being ergosterol the major sterol component in fungal membranes that participates in a variety of functions. The third module or late pathway involves the ergosterol synthesis itself through consecutive reactions that mainly occur in the endoplasmic reticulum (ER) membrane. In filamentous fungi, during the initial step of this module, lanosterol (lanosta-8,24-dien-3beta-ol) can be metabolized to eburicol. Sterol 14alpha-demethylase catalyzes the three-step oxidative removal of the 14alpha-methyl group (C-32) of both these sterols in the form of formate, and converts eburicol and lanosterol to 14-demethyleburicol (4,4,24-trimethylergosta-8,14,24(28)-trienol) and 4,4-dimethyl-5alpha-cholesta-8,14,24-trien-3beta-ol, respectively, which are further metabolized by other enzymes in the pathway to ergosterol. Can also use substrates not intrinsic to fungi, such as 24,25-dihydrolanosterol (DHL), producing 4,4-dimethyl-8,14-cholestadien-3-beta-ol, but at lower rates than the endogenous substrates. This is Lanosterol 14-alpha demethylase (ERG11) from Candida tropicalis (Yeast).